An 88-amino-acid chain; its full sequence is Cell division topological specificity factor (88 aa).

Belongs to the MinE family.

Its function is as follows. Prevents the cell division inhibition by proteins MinC and MinD at internal division sites while permitting inhibition at polar sites. This ensures cell division at the proper site by restricting the formation of a division septum at the midpoint of the long axis of the cell. The sequence is that of Cell division topological specificity factor from Carboxydothermus hydrogenoformans (strain ATCC BAA-161 / DSM 6008 / Z-2901).